Reading from the N-terminus, the 440-residue chain is Branched-chain amino acid permease BrnQ (440 aa).

12 helical membrane-spanning segments follow: residues 9–29 (YIII…NLIF), 46–66 (AGFL…FVFS), 80–100 (PVFG…FFAI), 121–141 (SPVS…LLSL), 149–169 (IVGK…VAVA), 196–216 (GYLT…VNAL), 227–247 (LIVV…VMYT), 284–304 (ILLG…LITA), 321–341 (IAVV…TQLI), 348–368 (LLTM…HSVF), 378–398 (SLLF…GIKI), and 414–434 (IGLG…ILSI).

Belongs to the branched chain amino acid transporter family.

It localises to the cell membrane. Functionally, branched-chain amino acid transport system which is involved in the uptake of isoleucine and valine. Probably does not transport leucine. Together with BcaP and BraB, plays an important role in the activation of CodY, a branched-chain amino acid-responsive transcriptional regulator that controls the expression of several dozen transcription units in B.subtilis. The sequence is that of Branched-chain amino acid permease BrnQ from Bacillus subtilis (strain 168).